We begin with the raw amino-acid sequence, 221 residues long: Small ribosomal subunit protein uS3 (221 aa).

One can recognise a KH type-2 domain in the interval 39–107 (LRKFLKDKLK…EVFLSIQEVR (69 aa)).

This sequence belongs to the universal ribosomal protein uS3 family. Part of the 30S ribosomal subunit. Forms a tight complex with proteins S10 and S14.

Its function is as follows. Binds the lower part of the 30S subunit head. Binds mRNA in the 70S ribosome, positioning it for translation. This chain is Small ribosomal subunit protein uS3, found in Bdellovibrio bacteriovorus (strain ATCC 15356 / DSM 50701 / NCIMB 9529 / HD100).